The chain runs to 118 residues: UPF0295 protein GWCH70_0499 (118 aa).

Transmembrane regions (helical) follow at residues 12–32 (IRTF…IGIF) and 42–62 (LFMI…FWIG).

The protein belongs to the UPF0295 family.

The protein localises to the cell membrane. This chain is UPF0295 protein GWCH70_0499, found in Geobacillus sp. (strain WCH70).